The chain runs to 468 residues: Tyrosine phenol-lyase (468 aa).

The residue at position 260 (Lys-260) is an N6-(pyridoxal phosphate)lysine.

This sequence belongs to the beta-eliminating lyase family. As to quaternary structure, homotetramer. The cofactor is pyridoxal 5'-phosphate.

The enzyme catalyses L-tyrosine + H2O = phenol + pyruvate + NH4(+). This Lacrimispora saccharolytica (strain ATCC 35040 / DSM 2544 / NRCC 2533 / WM1) (Clostridium saccharolyticum) protein is Tyrosine phenol-lyase.